A 522-amino-acid polypeptide reads, in one-letter code: Cytochrome P450 9c1 (522 aa).

C464 contacts heme.

The protein belongs to the cytochrome P450 family. Heme serves as cofactor.

The protein resides in the endoplasmic reticulum membrane. It localises to the microsome membrane. Its function is as follows. May be involved in the metabolism of insect hormones and in the breakdown of synthetic insecticides. The sequence is that of Cytochrome P450 9c1 (Cyp9c1) from Drosophila melanogaster (Fruit fly).